A 122-amino-acid polypeptide reads, in one-letter code: Large ribosomal subunit protein uL14 (122 aa).

Belongs to the universal ribosomal protein uL14 family. In terms of assembly, part of the 50S ribosomal subunit. Forms a cluster with proteins L3 and L19. In the 70S ribosome, L14 and L19 interact and together make contacts with the 16S rRNA in bridges B5 and B8.

Binds to 23S rRNA. Forms part of two intersubunit bridges in the 70S ribosome. In Caulobacter sp. (strain K31), this protein is Large ribosomal subunit protein uL14.